Here is a 385-residue protein sequence, read N- to C-terminus: Hemagglutinin-esterase (385 aa).

The first 11 residues, 1–11 (MLIIFLFFNFC), serve as a signal peptide directing secretion. Positions 1–121 (MLIIFLFFNF…SNDVWIFNKV (121 aa)) are esterase domain 1. Over 12–361 (YGFNEPLNVV…LNCFYDPLPI (350 aa)) the chain is Virion surface. S34 (nucleophile) is an active-site residue. C38 and C59 are oxidised to a cystine. 6 N-linked (GlcNAc...) asparagine; by host glycosylation sites follow: N83, N110, N145, N171, N196, and N251. A disulfide bridge connects residues C107 and C155. Positions 122-239 (RFYRALYSNM…GSYKIFSTGF (118 aa)) are receptor binding. Disulfide bonds link C183–C249 and C191–C222. Positions 240 to 352 (VLSIPTKALC…NCPTSAYIKL (113 aa)) are esterase domain 2. C280 and C285 are joined by a disulfide. N-linked (GlcNAc...) asparagine; by host glycosylation is present at N289. Active-site charge relay system residues include D299 and H302. Residues C320 and C344 are joined by a disulfide bond. The N-linked (GlcNAc...) asparagine; by host glycan is linked to N331. The chain crosses the membrane as a helical span at residues 362-382 (ILQGILLFLALLFIVFLLFLV). Residues 383 to 385 (YHG) are Intravirion-facing.

Belongs to the influenza type C/coronaviruses hemagglutinin-esterase family. As to quaternary structure, homodimer; disulfide-linked. Forms a complex with the M protein in the pre-Golgi. Associates then with S-M complex to form a ternary complex S-M-HE. Post-translationally, N-glycosylated in the host RER.

It localises to the virion membrane. Its subcellular location is the host cell membrane. The catalysed reaction is N-acetyl-9-O-acetylneuraminate + H2O = N-acetylneuraminate + acetate + H(+). It catalyses the reaction N-acetyl-4-O-acetylneuraminate + H2O = N-acetylneuraminate + acetate + H(+). In terms of biological role, structural protein that makes short spikes at the surface of the virus. Contains receptor binding and receptor-destroying activities. Mediates de-O-acetylation of N-acetyl-4-O-acetylneuraminic acid, which is probably the receptor determinant recognized by the virus on the surface of erythrocytes and susceptible cells. This receptor-destroying activity is important for virus release as it probably helps preventing self-aggregation and ensures the efficient spread of the progeny virus from cell to cell. May serve as a secondary viral attachment protein for initiating infection, the spike protein being the major one. May become a target for both the humoral and the cellular branches of the immune system. The sequence is that of Hemagglutinin-esterase from Human coronavirus HKU1 (isolate N2) (HCoV-HKU1).